The sequence spans 154 residues: UPF0260 protein NTHI1811 (154 aa).

This sequence belongs to the UPF0260 family.

This chain is UPF0260 protein NTHI1811, found in Haemophilus influenzae (strain 86-028NP).